The following is a 136-amino-acid chain: Large ribosomal subunit protein uL16 (136 aa).

The protein belongs to the universal ribosomal protein uL16 family. Part of the 50S ribosomal subunit.

Binds 23S rRNA and is also seen to make contacts with the A and possibly P site tRNAs. The polypeptide is Large ribosomal subunit protein uL16 (Histophilus somni (strain 129Pt) (Haemophilus somnus)).